We begin with the raw amino-acid sequence, 116 residues long: Large ribosomal subunit protein bL17 (116 aa).

The protein belongs to the bacterial ribosomal protein bL17 family. As to quaternary structure, part of the 50S ribosomal subunit. Contacts protein L32.

This is Large ribosomal subunit protein bL17 from Synechocystis sp. (strain ATCC 27184 / PCC 6803 / Kazusa).